A 173-amino-acid chain; its full sequence is Large ribosomal subunit protein uL10 (173 aa).

Belongs to the universal ribosomal protein uL10 family. In terms of assembly, part of the ribosomal stalk of the 50S ribosomal subunit. The N-terminus interacts with L11 and the large rRNA to form the base of the stalk. The C-terminus forms an elongated spine to which L12 dimers bind in a sequential fashion forming a multimeric L10(L12)X complex.

In terms of biological role, forms part of the ribosomal stalk, playing a central role in the interaction of the ribosome with GTP-bound translation factors. The sequence is that of Large ribosomal subunit protein uL10 from Chlorobaculum parvum (strain DSM 263 / NCIMB 8327) (Chlorobium vibrioforme subsp. thiosulfatophilum).